A 662-amino-acid chain; its full sequence is UvrABC system protein B (662 aa).

Residues Asp31–Arg188 form the Helicase ATP-binding domain. Gly44–Thr51 lines the ATP pocket. The Beta-hairpin motif lies at Tyr97–Val120. In terms of domain architecture, Helicase C-terminal spans Gln435–Ile601. The 36-residue stretch at Lys626–Leu661 folds into the UVR domain.

Belongs to the UvrB family. As to quaternary structure, forms a heterotetramer with UvrA during the search for lesions. Interacts with UvrC in an incision complex.

The protein resides in the cytoplasm. Its function is as follows. The UvrABC repair system catalyzes the recognition and processing of DNA lesions. A damage recognition complex composed of 2 UvrA and 2 UvrB subunits scans DNA for abnormalities. Upon binding of the UvrA(2)B(2) complex to a putative damaged site, the DNA wraps around one UvrB monomer. DNA wrap is dependent on ATP binding by UvrB and probably causes local melting of the DNA helix, facilitating insertion of UvrB beta-hairpin between the DNA strands. Then UvrB probes one DNA strand for the presence of a lesion. If a lesion is found the UvrA subunits dissociate and the UvrB-DNA preincision complex is formed. This complex is subsequently bound by UvrC and the second UvrB is released. If no lesion is found, the DNA wraps around the other UvrB subunit that will check the other stand for damage. The polypeptide is UvrABC system protein B (Streptococcus pneumoniae serotype 2 (strain D39 / NCTC 7466)).